Reading from the N-terminus, the 632-residue chain is Biosynthetic arginine decarboxylase (632 aa).

Lys-101 is subject to N6-(pyridoxal phosphate)lysine. 281 to 291 is a substrate binding site; that stretch reads FDVGGGLGVDY.

The protein belongs to the Orn/Lys/Arg decarboxylase class-II family. SpeA subfamily. Mg(2+) serves as cofactor. The cofactor is pyridoxal 5'-phosphate.

The catalysed reaction is L-arginine + H(+) = agmatine + CO2. Its pathway is amine and polyamine biosynthesis; agmatine biosynthesis; agmatine from L-arginine: step 1/1. Catalyzes the biosynthesis of agmatine from arginine. This chain is Biosynthetic arginine decarboxylase, found in Salmonella dublin (strain CT_02021853).